Here is a 542-residue protein sequence, read N- to C-terminus: Glutamyl-tRNA(Gln) amidotransferase subunit B, mitochondrial (542 aa).

The N-terminal 66 residues, 1 to 66 (MRVFRRFYQV…PNSHTSFFDI (66 aa)), are a transit peptide targeting the mitochondrion.

Belongs to the GatB/GatE family. GatB subfamily. As to quaternary structure, subunit of the heterotrimeric GatFAB amidotransferase (AdT) complex, composed of A, B and F subunits.

It is found in the mitochondrion. The enzyme catalyses L-glutamyl-tRNA(Gln) + L-glutamine + ATP + H2O = L-glutaminyl-tRNA(Gln) + L-glutamate + ADP + phosphate + H(+). In terms of biological role, allows the formation of correctly charged Gln-tRNA(Gln) through the transamidation of misacylated Glu-tRNA(Gln) in the mitochondria. The reaction takes place in the presence of glutamine and ATP through an activated gamma-phospho-Glu-tRNA(Gln). This Zygosaccharomyces rouxii (strain ATCC 2623 / CBS 732 / NBRC 1130 / NCYC 568 / NRRL Y-229) protein is Glutamyl-tRNA(Gln) amidotransferase subunit B, mitochondrial.